The sequence spans 152 residues: Protein-export protein SecB (152 aa).

Belongs to the SecB family. As to quaternary structure, homotetramer, a dimer of dimers. One homotetramer interacts with 1 SecA dimer.

Its subcellular location is the cytoplasm. Its function is as follows. One of the proteins required for the normal export of preproteins out of the cell cytoplasm. It is a molecular chaperone that binds to a subset of precursor proteins, maintaining them in a translocation-competent state. It also specifically binds to its receptor SecA. The polypeptide is Protein-export protein SecB (Rickettsia africae (strain ESF-5)).